Here is a 117-residue protein sequence, read N- to C-terminus: Immunoglobulin kappa variable 1D-43 (117 aa).

The first 22 residues, 1–22, serve as a signal peptide directing secretion; it reads MDMRVPAQRLGLLLLWFPGARC. The tract at residues 23–45 is framework-1; the sequence is AIRMTQSPFSLSASVGDRVTITC. One can recognise an Ig-like domain in the interval 23 to 117; sequence AIRMTQSPFS…YYCQQYYSTP (95 aa). Cys-45 and Cys-110 form a disulfide bridge. Positions 46 to 56 are complementarity-determining-1; it reads WASQGISSYLA. Residues 57–71 form a framework-2 region; the sequence is WYQQKPAKAPKLFIY. The segment at 72 to 78 is complementarity-determining-2; that stretch reads YASSLQS. The framework-3 stretch occupies residues 79–110; sequence GVPSRFSGSGSGTDYTLTISSLQPEDFATYYC. The interval 111–117 is complementarity-determining-3; the sequence is QQYYSTP.

As to quaternary structure, immunoglobulins are composed of two identical heavy chains and two identical light chains; disulfide-linked.

The protein localises to the secreted. It is found in the cell membrane. V region of the variable domain of immunoglobulin light chains that participates in the antigen recognition. Immunoglobulins, also known as antibodies, are membrane-bound or secreted glycoproteins produced by B lymphocytes. In the recognition phase of humoral immunity, the membrane-bound immunoglobulins serve as receptors which, upon binding of a specific antigen, trigger the clonal expansion and differentiation of B lymphocytes into immunoglobulins-secreting plasma cells. Secreted immunoglobulins mediate the effector phase of humoral immunity, which results in the elimination of bound antigens. The antigen binding site is formed by the variable domain of one heavy chain, together with that of its associated light chain. Thus, each immunoglobulin has two antigen binding sites with remarkable affinity for a particular antigen. The variable domains are assembled by a process called V-(D)-J rearrangement and can then be subjected to somatic hypermutations which, after exposure to antigen and selection, allow affinity maturation for a particular antigen. This chain is Immunoglobulin kappa variable 1D-43, found in Homo sapiens (Human).